The primary structure comprises 264 residues: S-adenosylmethionine decarboxylase proenzyme (264 aa).

The active-site Schiff-base intermediate with substrate; via pyruvic acid is the Ser-113. Ser-113 is subject to Pyruvic acid (Ser); by autocatalysis. The active-site Proton acceptor; for processing activity is the His-118. Cys-141 serves as the catalytic Proton donor; for catalytic activity.

This sequence belongs to the prokaryotic AdoMetDC family. Type 2 subfamily. As to quaternary structure, heterooctamer of four alpha and four beta chains arranged as a tetramer of alpha/beta heterodimers. Pyruvate serves as cofactor. Post-translationally, is synthesized initially as an inactive proenzyme. Formation of the active enzyme involves a self-maturation process in which the active site pyruvoyl group is generated from an internal serine residue via an autocatalytic post-translational modification. Two non-identical subunits are generated from the proenzyme in this reaction, and the pyruvate is formed at the N-terminus of the alpha chain, which is derived from the carboxyl end of the proenzyme. The post-translation cleavage follows an unusual pathway, termed non-hydrolytic serinolysis, in which the side chain hydroxyl group of the serine supplies its oxygen atom to form the C-terminus of the beta chain, while the remainder of the serine residue undergoes an oxidative deamination to produce ammonia and the pyruvoyl group blocking the N-terminus of the alpha chain.

The enzyme catalyses S-adenosyl-L-methionine + H(+) = S-adenosyl 3-(methylsulfanyl)propylamine + CO2. Its pathway is amine and polyamine biosynthesis; S-adenosylmethioninamine biosynthesis; S-adenosylmethioninamine from S-adenosyl-L-methionine: step 1/1. Functionally, catalyzes the decarboxylation of S-adenosylmethionine to S-adenosylmethioninamine (dcAdoMet), the propylamine donor required for the synthesis of the polyamines spermine and spermidine from the diamine putrescine. The polypeptide is S-adenosylmethionine decarboxylase proenzyme (Pseudomonas syringae pv. tomato (strain ATCC BAA-871 / DC3000)).